The chain runs to 227 residues: YEATS domain-containing protein 4 (227 aa).

The 144-residue stretch at 15-158 (RVKGVTIVKP…AMMQQLLTTS (144 aa)) folds into the YEATS domain. Lys37 is covalently cross-linked (Glycyl lysine isopeptide (Lys-Gly) (interchain with G-Cter in SUMO2)). The diacetylated histone H3 binding stretch occupies residues 93–97 (WGEFE). The segment at 163 to 227 (LGAYKHETEF…LEEDDQTKDI (65 aa)) is interaction with MLLT10. Residues 168–227 (HETEFAELEVKTREKLEAAKKKTSFEIAELKERLKASRETINCLKNEIRKLEEDDQTKDI) are interaction with TACC1. A coiled-coil region spans residues 178-226 (KTREKLEAAKKKTSFEIAELKERLKASRETINCLKNEIRKLEEDDQTKD).

As to quaternary structure, component of numerous complexes with chromatin remodeling and histone acetyltransferase activity. Component of the NuA4 histone acetyltransferase complex which contains the catalytic subunit KAT5/TIP60 and the subunits EP400, TRRAP/PAF400, BRD8/SMAP, EPC1, DMAP1/DNMAP1, RUVBL1/TIP49, RUVBL2, ING3, actin, ACTL6A/BAF53A, MORF4L1/MRG15, MORF4L2/MRGX, MRGBP, YEATS4/GAS41, VPS72/YL1 and MEAF6. The NuA4 complex interacts with MYC and the adenovirus E1A protein. Component of a NuA4-related complex which contains EP400, TRRAP/PAF400, SRCAP, BRD8/SMAP, EPC1, DMAP1/DNMAP1, RUVBL1/TIP49, RUVBL2, actin, ACTL6A/BAF53A, VPS72 and YEATS4/GAS41. Interacts with MLLT10/AF10. Also interacts with the SWI/SNF component SMARCB1/BAF47, TACC1 and TACC2, and the nuclear matrix protein NUMA1.

Its subcellular location is the nucleus. Functionally, chromatin reader component of the NuA4 histone acetyltransferase (HAT) complex, a complex involved in transcriptional activation of select genes principally by acetylation of nucleosomal histones H4 and H2A. Specifically recognizes and binds acylated histone H3, with a preference for histone H3 diacetylated at 'Lys-18' and 'Lys-27' (H3K18ac and H3K27ac) or histone H3 diacetylated at 'Lys-14' and 'Lys-27' (H3K14ac and H3K27ac). Also able to recognize and bind crotonylated histone H3. May also recognize and bind histone H3 succinylated at 'Lys-122' (H3K122succ); additional evidences are however required to confirm this result in vivo. Plays a key role in histone variant H2AZ1/H2A.Z deposition into specific chromatin regions: recognizes and binds H3K14ac and H3K27ac on the promoters of actively transcribed genes and recruits NuA4-related complex to deposit H2AZ1/H2A.Z. H2AZ1/H2A.Z deposition is required for maintenance of embryonic stem cell. In Mus musculus (Mouse), this protein is YEATS domain-containing protein 4.